The sequence spans 268 residues: Type III pantothenate kinase 1 (268 aa).

ATP is bound at residue 6-13; sequence DIGNTNIT. Substrate contacts are provided by residues tyrosine 100 and 107 to 110; that span reads GTDR. The active-site Proton acceptor is aspartate 109. Aspartate 133 is a K(+) binding site. Residue threonine 136 coordinates ATP.

This sequence belongs to the type III pantothenate kinase family. Homodimer. NH4(+) serves as cofactor. The cofactor is K(+).

Its subcellular location is the cytoplasm. It catalyses the reaction (R)-pantothenate + ATP = (R)-4'-phosphopantothenate + ADP + H(+). It participates in cofactor biosynthesis; coenzyme A biosynthesis; CoA from (R)-pantothenate: step 1/5. Catalyzes the phosphorylation of pantothenate (Pan), the first step in CoA biosynthesis. This is Type III pantothenate kinase 1 from Symbiobacterium thermophilum (strain DSM 24528 / JCM 14929 / IAM 14863 / T).